Consider the following 277-residue polypeptide: Basic leucine zipper 9 (277 aa).

Residues 73–141 (ADSPVSANKP…ESAKRSRRRK (69 aa)) form a disordered region. Ser100 is modified (phosphoserine). A compositionally biased stretch (polar residues) spans 109–118 (AGQSEMTNDP). The 64-residue stretch at 120 to 183 (DLKRIRRMNS…RSAGTNNRVL (64 aa)) folds into the bZIP domain. A basic motif region spans residues 122 to 141 (KRIRRMNSNRESAKRSRRRK). A Nuclear localization signal motif is present at residues 124-131 (IRRMNSNR). Residues 148 to 162 (LETQVDSLKGDNSTL) form a leucine-zipper region.

The protein belongs to the bZIP family. In terms of assembly, homodimer. Interacts with BZIP1, BZIP2, BZIP10, BZIP11, BZIP25, BZIP44, BZIP53 and BZIP63. In terms of processing, phosphorylated. In terms of tissue distribution, expressed in roots, shoots, stems, young leaves, and flowers, mostly in vascular tissues (e.g. phloem).

It localises to the nucleus. In terms of biological role, transcription factor. The sequence is that of Basic leucine zipper 9 (BZIP9) from Arabidopsis thaliana (Mouse-ear cress).